We begin with the raw amino-acid sequence, 396 residues long: Acetate kinase (396 aa).

Mg(2+) is bound at residue asparagine 8. Lysine 15 serves as a coordination point for ATP. Arginine 89 is a substrate binding site. The active-site Proton donor/acceptor is the aspartate 146. Residues 206-210 (HLGNG), 281-283 (DLR), and 329-333 (GIGEN) each bind ATP. Residue glutamate 382 participates in Mg(2+) binding.

This sequence belongs to the acetokinase family. In terms of assembly, homodimer. Requires Mg(2+) as cofactor. Mn(2+) is required as a cofactor.

The protein resides in the cytoplasm. The enzyme catalyses acetate + ATP = acetyl phosphate + ADP. It functions in the pathway metabolic intermediate biosynthesis; acetyl-CoA biosynthesis; acetyl-CoA from acetate: step 1/2. In terms of biological role, catalyzes the formation of acetyl phosphate from acetate and ATP. Can also catalyze the reverse reaction. The protein is Acetate kinase of Geobacillus kaustophilus (strain HTA426).